The sequence spans 46 residues: Photosystem II reaction center protein K (46 aa).

The propeptide occupies 1–9; that stretch reads MLILLNTFA. The helical transmembrane segment at 25 to 45 threads the bilayer; that stretch reads LPLIPLFFFLLVFVWQAAVGF.

This sequence belongs to the PsbK family. As to quaternary structure, PSII is composed of 1 copy each of membrane proteins PsbA, PsbB, PsbC, PsbD, PsbE, PsbF, PsbH, PsbI, PsbJ, PsbK, PsbL, PsbM, PsbT, PsbX, PsbY, Psb30/Ycf12, peripheral proteins PsbO, CyanoQ (PsbQ), PsbU, PsbV and a large number of cofactors. It forms dimeric complexes.

Its subcellular location is the cellular thylakoid membrane. One of the components of the core complex of photosystem II (PSII). PSII is a light-driven water:plastoquinone oxidoreductase that uses light energy to abstract electrons from H(2)O, generating O(2) and a proton gradient subsequently used for ATP formation. It consists of a core antenna complex that captures photons, and an electron transfer chain that converts photonic excitation into a charge separation. This is Photosystem II reaction center protein K from Prochlorococcus marinus (strain MIT 9215).